A 990-amino-acid polypeptide reads, in one-letter code: Mediator of RNA polymerase II transcription subunit 5 (990 aa).

Belongs to the Mediator complex subunit 5 family. Component of the Mediator complex.

Its subcellular location is the nucleus. Its function is as follows. Component of the Mediator complex, a coactivator involved in the regulated transcription of nearly all RNA polymerase II-dependent genes. Mediator functions as a bridge to convey information from gene-specific regulatory proteins to the basal RNA polymerase II transcription machinery. Mediator is recruited to promoters by direct interactions with regulatory proteins and serves as a scaffold for the assembly of a functional preinitiation complex with RNA polymerase II and the general transcription factors. The polypeptide is Mediator of RNA polymerase II transcription subunit 5 (NUT1) (Debaryomyces hansenii (strain ATCC 36239 / CBS 767 / BCRC 21394 / JCM 1990 / NBRC 0083 / IGC 2968) (Yeast)).